We begin with the raw amino-acid sequence, 143 residues long: MIRKKKKVKKIRGSRTCGGGSHKKRRGAGNKGGRGMAGGHKHKWTWIIKYCPDYFGKYGFKRHPSLVKRLETINVGELEEIVLKNPDKFEKEDDKFVVDVIELGYEKVLGKGKVTIPMIVKAVEVSEKAREKIEAVGGEVVEL.

The span at 1–13 (MIRKKKKVKKIRG) shows a compositional bias: basic residues. The segment at 1–39 (MIRKKKKVKKIRGSRTCGGGSHKKRRGAGNKGGRGMAGG) is disordered. The span at 29–38 (GNKGGRGMAG) shows a compositional bias: gly residues.

Belongs to the universal ribosomal protein uL15 family. As to quaternary structure, part of the 50S ribosomal subunit.

Binds to the 23S rRNA. This chain is Large ribosomal subunit protein uL15, found in Methanocaldococcus jannaschii (strain ATCC 43067 / DSM 2661 / JAL-1 / JCM 10045 / NBRC 100440) (Methanococcus jannaschii).